We begin with the raw amino-acid sequence, 203 residues long: ATP-dependent Clp protease proteolytic subunit (203 aa).

S107 functions as the Nucleophile in the catalytic mechanism. Residue H132 is part of the active site.

The protein belongs to the peptidase S14 family. Fourteen ClpP subunits assemble into 2 heptameric rings which stack back to back to give a disk-like structure with a central cavity, resembling the structure of eukaryotic proteasomes.

It is found in the cytoplasm. It carries out the reaction Hydrolysis of proteins to small peptides in the presence of ATP and magnesium. alpha-casein is the usual test substrate. In the absence of ATP, only oligopeptides shorter than five residues are hydrolyzed (such as succinyl-Leu-Tyr-|-NHMec, and Leu-Tyr-Leu-|-Tyr-Trp, in which cleavage of the -Tyr-|-Leu- and -Tyr-|-Trp bonds also occurs).. In terms of biological role, cleaves peptides in various proteins in a process that requires ATP hydrolysis. Has a chymotrypsin-like activity. Plays a major role in the degradation of misfolded proteins. The protein is ATP-dependent Clp protease proteolytic subunit of Pelagibacter ubique (strain HTCC1062).